A 404-amino-acid polypeptide reads, in one-letter code: Sorting nexin-5 (404 aa).

An N-acetylalanine modification is found at Ala2. Residues 25–172 (LNVDPSLQID…HVFLEYDQDL (148 aa)) enclose the PX domain. Residues 40-46 (SERDKVK), 99-105 (FDGPREK), and 113-116 (EGSM) each bind a 1,2-diacyl-sn-glycero-3-phospho-(1D-myo-inositol-4,5-bisphosphate). Residues 169–261 (DQDLSVRRKN…HSLALEEPTV (93 aa)) are interaction with DOCK1. The segment at 183-200 (FGGFFKSVVKSADEVLFS) is membrane-binding amphipathic helix. A Phosphoserine modification is found at Ser193. The region spanning 202–404 (VKEVDDFFEQ…QSCIDLFKNN (203 aa)) is the BAR domain. Position 275 is an N6-acetyllysine (Lys275).

It belongs to the sorting nexin family. As to quaternary structure, forms heterodimers with BAR domain-containing sorting nexins SNX1 and SNX2; does not homodimerize. The heterodimers are proposed to self-assemble into helical arrays on the membrane to stabilize and expand local membrane curvature underlying endosomal tubule formation. Thought to be a component of the originally described retromer complex (also called SNX-BAR retromer) which is a pentamer containing the heterotrimeric retromer cargo-selective complex (CSC), also described as vacuolar protein sorting subcomplex (VPS), and a heterodimeric membrane-deforming subcomplex formed between SNX1 or SNX2 and SNX5 or SNX6 (also called SNX-BAR subcomplex); the respective CSC and SNX-BAR subcomplexes associate with low affinity. Interacts with SNX1, SNX2, VPS26A, VPS29, VPS35, DCTN1, DOCK1, MIB1, PIP5K1C. Interacts with HGS; increased by PIP5K1C kinase activity and by PtdIns(3P) and/or PtdIns(3,4)P2.

The protein resides in the endosome. The protein localises to the early endosome. Its subcellular location is the early endosome membrane. It is found in the cell membrane. It localises to the cytoplasmic vesicle membrane. The protein resides in the cytoplasm. The protein localises to the cell projection. Its subcellular location is the phagocytic cup. It is found in the ruffle. Functionally, involved in several stages of intracellular trafficking. Interacts with membranes containing phosphatidylinositol lipids. Acts in part as component of the retromer membrane-deforming SNX-BAR subcomplex. The SNX-BAR retromer mediates retrograde transport of cargo proteins from endosomes to the trans-Golgi network (TGN) and is involved in endosome-to-plasma membrane transport for cargo protein recycling. The SNX-BAR subcomplex functions to deform the donor membrane into a tubular profile called endosome-to-TGN transport carrier (ETC). Does not have in vitro vesicle-to-membrane remodeling activity. Involved in retrograde transport of lysosomal enzyme receptor IGF2R. May function as link between endosomal transport vesicles and dynactin. Plays a role in the internalization of EGFR after EGF stimulation. Involved in EGFR endosomal sorting and degradation; the function involves PIP5K1C and is retromer-independent. Together with PIP5K1C facilitates HGS interaction with ubiquitinated EGFR, which initiates EGFR sorting to intraluminal vesicles (ILVs) of the multivesicular body for subsequent lysosomal degradation. Involved in E-cadherin sorting and degradation; inhibits PIP5K1C-mediated E-cadherin degradation. Plays a role in macropinocytosis. The protein is Sorting nexin-5 (SNX5) of Bos taurus (Bovine).